The sequence spans 555 residues: Protein tyrosine phosphatase-like protein egg-3 (555 aa).

2 consecutive short sequence motifs (D-box) follow at residues 96–99 (RILL) and 130–133 (RDRL). In terms of domain architecture, Tyrosine-protein phosphatase spans 207-514 (FVQEFNRLDR…LFIYRVILRW (308 aa)). The RXXL motif; required for cortical localization signature appears at 253-256 (RVKL). An RXXL motif motif is present at residues 266 to 269 (RNEL). Short sequence motifs (RXXL motif; required for cortical localization) lie at residues 509–512 (RVIL) and 525–528 (RAAL).

This sequence belongs to the protein-tyrosine phosphatase family. Part of a complex, consisting of pseudophosphatases egg-3, egg-4, egg-5 and kinase mbk-2; this complex is required for the oocyte-to-zygote transition. Interacts (via tyrosine-protein phosphatase domain) with kinase mbk-2 (via N-terminus); the interaction does not affect mbk-2 kinase activity, is enhanced by mbk-2 tyrosine phosphorylation status and requires prior binding of mbk-2 to egg-4 and egg-5. Interacts with egg-4.

Its subcellular location is the cytoplasm. It localises to the cell cortex. Its function is as follows. Probable pseudophosphatase required for the oocyte-to-zygote transition during which it regulates the polarized dispersal of the cortical actin cytoskeleton, the synthesis of the eggshell chitin layer and the formation of the polar bodies after meiosis I and II. Acts as a scaffold to tether kinase mbk-2 and pseudophosphatases egg-4 and egg-5 to the oocyte cortex and thus restricts mbk-2 activity to the cortex during meiosis I. Regulates mbk-2 localization to cytoplasmic foci during meiosis II. Also required for chitin synthase chs-1 localization to the cell cortex of unfertilized oocytes and to cytoplasmic foci in the fertilized embryo. This chain is Protein tyrosine phosphatase-like protein egg-3, found in Caenorhabditis elegans.